Consider the following 128-residue polypeptide: Putative protein SEM1, isoform 2 (128 aa).

The span at 22–32 shows a compositional bias: basic residues; the sequence is KHGIKRGRRPS. The interval 22 to 42 is disordered; sequence KHGIKRGRRPSIRSPAQRARG.

In Homo sapiens (Human), this protein is Putative protein SEM1, isoform 2.